A 624-amino-acid chain; its full sequence is DNA mismatch repair protein MutL (624 aa).

Positions 340 to 355 (NKLDTDSHSQSHERGH) are enriched in basic and acidic residues. Positions 340–415 (NKLDTDSHSQ…RGGATSSYRQ (76 aa)) are disordered. 2 stretches are compositionally biased toward polar residues: residues 372–383 (HQTAPSTKASTE) and 391–415 (SPISAVPSHTSDVQSRGGATSSYRQ).

The protein belongs to the DNA mismatch repair MutL/HexB family.

Its function is as follows. This protein is involved in the repair of mismatches in DNA. It is required for dam-dependent methyl-directed DNA mismatch repair. May act as a 'molecular matchmaker', a protein that promotes the formation of a stable complex between two or more DNA-binding proteins in an ATP-dependent manner without itself being part of a final effector complex. The sequence is that of DNA mismatch repair protein MutL from Shewanella sediminis (strain HAW-EB3).